Reading from the N-terminus, the 64-residue chain is DNA-directed RNA polymerase subunit Rpo10 (64 aa).

The Zn(2+) site is built by C7, C10, C45, and C46.

It belongs to the archaeal Rpo10/eukaryotic RPB10 RNA polymerase subunit family. Part of the RNA polymerase complex. Requires Zn(2+) as cofactor.

It localises to the cytoplasm. It catalyses the reaction RNA(n) + a ribonucleoside 5'-triphosphate = RNA(n+1) + diphosphate. In terms of biological role, DNA-dependent RNA polymerase (RNAP) catalyzes the transcription of DNA into RNA using the four ribonucleoside triphosphates as substrates. This is DNA-directed RNA polymerase subunit Rpo10 from Haloquadratum walsbyi (strain DSM 16790 / HBSQ001).